The following is a 64-amino-acid chain: Short neurotoxin 1 (64 aa).

Disulfide bonds link C3-C26, C20-C43, C45-C56, and C57-C62.

Belongs to the three-finger toxin family. Short-chain subfamily. Type I alpha-neurotoxin sub-subfamily. In terms of tissue distribution, expressed by the venom gland.

Its subcellular location is the secreted. In terms of biological role, binds to muscle nicotinic acetylcholine receptor (nAChR) and inhibit acetylcholine from binding to the receptor, thereby impairing neuromuscular transmission. The protein is Short neurotoxin 1 of Bungarus fasciatus (Banded krait).